The primary structure comprises 322 residues: Ferrochelatase (322 aa).

Residues H194 and E275 each coordinate Fe cation.

The protein belongs to the ferrochelatase family.

Its subcellular location is the cytoplasm. It catalyses the reaction heme b + 2 H(+) = protoporphyrin IX + Fe(2+). The protein operates within porphyrin-containing compound metabolism; protoheme biosynthesis; protoheme from protoporphyrin-IX: step 1/1. In terms of biological role, catalyzes the ferrous insertion into protoporphyrin IX. This Yersinia enterocolitica serotype O:8 / biotype 1B (strain NCTC 13174 / 8081) protein is Ferrochelatase.